Reading from the N-terminus, the 210-residue chain is ATP-dependent dethiobiotin synthetase BioD (210 aa).

ATP is bound at residue 13–18; that stretch reads DVGKTV. Mg(2+) is bound at residue Thr17. Lys33 is a catalytic residue. Residues Arg47 and Glu101 each coordinate Mg(2+). Residues 101–104 and 185–187 each bind ATP; these read EGAG and PPL.

It belongs to the dethiobiotin synthetase family. As to quaternary structure, homodimer. Requires Mg(2+) as cofactor.

Its subcellular location is the cytoplasm. The enzyme catalyses (7R,8S)-7,8-diammoniononanoate + CO2 + ATP = (4R,5S)-dethiobiotin + ADP + phosphate + 3 H(+). It functions in the pathway cofactor biosynthesis; biotin biosynthesis; biotin from 7,8-diaminononanoate: step 1/2. Functionally, catalyzes a mechanistically unusual reaction, the ATP-dependent insertion of CO2 between the N7 and N8 nitrogen atoms of 7,8-diaminopelargonic acid (DAPA, also called 7,8-diammoniononanoate) to form a ureido ring. This is ATP-dependent dethiobiotin synthetase BioD from Afipia carboxidovorans (strain ATCC 49405 / DSM 1227 / KCTC 32145 / OM5) (Oligotropha carboxidovorans).